Reading from the N-terminus, the 137-residue chain is uncharacterized protein (137 aa).

This sequence to E.coli YfdK.

This is an uncharacterized protein from Escherichia coli (strain K12).